We begin with the raw amino-acid sequence, 308 residues long: Inactive C-alpha-formylglycine-generating enzyme 2 (308 aa).

The N-terminal stretch at 1-33 (MRSEFWFPSMGSLLPPVLLLWLLSCPRLQLGHA) is a signal peptide. A disulfide bond links cysteine 163 and cysteine 297. An N-linked (GlcNAc...) asparagine glycan is attached at asparagine 198. Ca(2+) contacts are provided by asparagine 201, leucine 202, aspartate 215, phenylalanine 217, aspartate 236, glycine 239, valine 241, and glutamate 243. Positions 281–291 (RMGNTPDSASD) are enriched in polar residues. The tract at residues 281–308 (RMGNTPDSASDNLGFRCASSAGRPKEDL) is disordered. Residues 305–308 (KEDL) carry the Non-canonical ER retention motif motif.

It belongs to the sulfatase-modifying factor family. In terms of assembly, homodimer and heterodimer with SUMF1.

It is found in the endoplasmic reticulum lumen. Its function is as follows. Lacks formylglycine generating activity and is unable to convert newly synthesized inactive sulfatases to their active form. Inhibits the activation of sulfatases by SUMF1. The sequence is that of Inactive C-alpha-formylglycine-generating enzyme 2 from Mus musculus (Mouse).